Here is a 386-residue protein sequence, read N- to C-terminus: Patatin-17 (386 aa).

A signal peptide spans 1–23 (MATTKSFLILIFMILATTSSTFA). Residues 32–229 (LSIDGGGIRG…TVADPALLSI (198 aa)) form the PNPLA domain. Positions 36 to 41 (GGGIRG) match the GXGXXG motif. A GXSXG motif is present at residues 75-79 (GTSTG). The active-site Nucleophile is S77. N-linked (GlcNAc...) asparagine glycosylation occurs at N202. The active-site Proton acceptor is D215. Positions 215 to 217 (DGA) match the DGA/G motif. Positions 321-384 (ENALTGTTTE…DRKKLRANKA (64 aa)) form a coiled coil.

The protein belongs to the patatin family.

The protein localises to the vacuole. Non-specific lipolytic acyl hydrolase (LAH), an activity which is thought to be involved in the response of tubers to pathogens. Catalyzes the non-specific hydrolysis of phospholipids, glycolipids, sulfolipids, and mono- and diacylglycerols includng p-nitrophenyl caprate. Confers resistance to southern corn rootworm (SCRW). In Solanum cardiophyllum (Heartleaf nightshade), this protein is Patatin-17.